A 1716-amino-acid polypeptide reads, in one-letter code: Histone-lysine N-methyltransferase SETD1A (1716 aa).

Residues Leu-60–Gly-89 form an interaction with WDR82 region. The RRM domain maps to Asp-84–Lys-172. Disordered regions lie at residues Pro-194–Pro-367, Thr-380–Ser-499, Phe-516–His-670, Ala-849–Lys-869, Lys-911–Val-1206, Glu-1230–Val-1259, and Gly-1275–Pro-1297. The segment covering Ser-222 to Thr-231 has biased composition (low complexity). Residues Cys-243–Gly-277 are compositionally biased toward polar residues. 2 stretches are compositionally biased toward low complexity: residues Ser-278–Ser-295 and Ser-315–Ser-357. Residues Ser-430 to Pro-440 show a composition bias toward pro residues. The segment covering Gly-441–Ala-461 has biased composition (gly residues). A Phosphoserine modification is found at Ser-477. A compositionally biased stretch (low complexity) spans Ser-477–Glu-487. Over residues Thr-488–Ser-499 the composition is skewed to polar residues. A phosphoserine mark is found at Ser-521 and Ser-578. Polar residues predominate over residues Ala-581–Ser-591. Pro residues-rich tracts occupy residues Ser-606 to Tyr-631 and Gly-638 to His-670. Residues Gln-859–Lys-869 show a composition bias toward basic and acidic residues. A Phosphoserine modification is found at Ser-930. 2 stretches are compositionally biased toward acidic residues: residues Lys-991–Val-1009 and Ala-1018–Asp-1027. Low complexity predominate over residues Ser-1028–Ser-1071. At Ser-1110 the chain carries Phosphoserine. The segment covering Glu-1130–Ala-1150 has biased composition (pro residues). The span at Asp-1283–Asp-1292 shows a compositional bias: acidic residues. The HCFC1-binding motif (HBM) signature appears at Glu-1307–Ala-1311. 2 disordered regions span residues Glu-1355 to Arg-1427 and Thr-1480 to Tyr-1508. A compositionally biased stretch (acidic residues) spans Glu-1369 to Ser-1383. Over residues Arg-1399–Pro-1412 the composition is skewed to basic residues. A compositionally biased stretch (pro residues) spans Pro-1413–Phe-1424. The interval Phe-1424–Leu-1459 is interaction with CFP1. Residues Leu-1459 to Arg-1546 form an interaction with ASH2L, RBBP5 and WDR5 region. Positions Gly-1501–Glu-1506 match the WDR5 interaction motif (WIN) motif. Positions Arg-1546–Arg-1551 match the RxxxRR motif motif. Residues Lys-1577 to Lys-1694 enclose the SET domain. Tyr-1693 is an S-adenosyl-L-methionine binding site. One can recognise a Post-SET domain in the interval Asn-1700 to Asn-1716.

Belongs to the class V-like SAM-binding methyltransferase superfamily. As to quaternary structure, component of the SET1A/COMPASS complex composed of the catalytic subunit SETD1A, WDR5, WDR82, RBBP5, ASH2L/ASH2, CXXC1/CFP1, HCFC1 and DPY30 homotrimer. Forms a core complex with the evolutionary conserved subcomplex WRAD composed of WDR5, RBBP5, ASH2L/ASH2 and DPY30 subunits; WRAD differentially stimulates the methyltransferase activity. Interacts with BOD1L1 (via COMPASS-Shg1 domain) at replication forks. Interacts with HCFC1. Interacts with ASH2/ASH2L. Interacts with CXXC1/CFP1. Interacts with RBBP5. Interacts (via N-terminal region) with WDR82; the interaction is direct. Interacts (via the RRM domain) with hyperphosphorylated C-terminal domain (CTD) of RNA polymerase II large subunit (POLR2A) only in the presence of WDR82. Binds specifically to CTD heptad repeats phosphorylated on 'Ser-5' of each heptad. Interacts with ZNF335. Interacts with SUPT6H. Interacts with NAP1L1. Interacts (via WIN motif) with WDR5.

Its subcellular location is the nucleus. It localises to the nucleus speckle. It is found in the chromosome. The protein resides in the cytoplasm. The enzyme catalyses L-lysyl(4)-[histone H3] + S-adenosyl-L-methionine = N(6)-methyl-L-lysyl(4)-[histone H3] + S-adenosyl-L-homocysteine + H(+). It carries out the reaction N(6)-methyl-L-lysyl(4)-[histone H3] + S-adenosyl-L-methionine = N(6),N(6)-dimethyl-L-lysyl(4)-[histone H3] + S-adenosyl-L-homocysteine + H(+). The catalysed reaction is N(6),N(6)-dimethyl-L-lysyl(4)-[histone H3] + S-adenosyl-L-methionine = N(6),N(6),N(6)-trimethyl-L-lysyl(4)-[histone H3] + S-adenosyl-L-homocysteine + H(+). Its function is as follows. Histone methyltransferase that catalyzes methyl group transfer from S-adenosyl-L-methionine to the epsilon-amino group of 'Lys-4' of histone H3 (H3K4) via a non-processive mechanism. Part of chromatin remodeling machinery, forms H3K4me1, H3K4me2 and H3K4me3 methylation marks at active chromatin sites where transcription and DNA repair take place. Responsible for H3K4me3 enriched promoters and transcriptional programming of inner mass stem cells and neuron progenitors during embryogenesis. Required for H3K4me1 mark at stalled replication forks. Mediates FANCD2-dependent nucleosome remodeling and RAD51 nucleofilaments stabilization at reversed forks, protecting them from nucleolytic degradation. Does not methylate 'Lys-4' of histone H3 if the neighboring 'Lys-9' residue is already methylated. Has RNA binding activity towards transcripts involved in RNA processing and the DNA damage response. The protein is Histone-lysine N-methyltransferase SETD1A (Setd1a) of Mus musculus (Mouse).